The sequence spans 122 residues: UPF0102 protein RHECIAT_CH0000358 (122 aa).

The protein belongs to the UPF0102 family.

The chain is UPF0102 protein RHECIAT_CH0000358 from Rhizobium etli (strain CIAT 652).